A 356-amino-acid polypeptide reads, in one-letter code: Galactosylgalactosylxylosylprotein 3-beta-glucuronosyltransferase sqv-8 (356 aa).

Topologically, residues 1 to 9 (MFPSRLLEK) are cytoplasmic. Residues 10–30 (WWLRAFIALVIFFVWQLFYAI) form a helical; Signal-anchor for type II membrane protein membrane-spanning segment. At 31 to 356 (NRVQSLEEER…LEAHALGVDN (326 aa)) the chain is on the lumenal side. N93 and N173 each carry an N-linked (GlcNAc...) asparagine glycan. Mn(2+) is bound at residue D208. 2 N-linked (GlcNAc...) asparagine glycosylation sites follow: N246 and N272. The active-site Proton acceptor is E294.

Belongs to the glycosyltransferase 43 family.

The protein localises to the membrane. It catalyses the reaction 3-O-(beta-D-galactosyl-(1-&gt;3)-beta-D-galactosyl-(1-&gt;4)-beta-D-xylosyl)-L-seryl-[protein] + UDP-alpha-D-glucuronate = 3-O-(beta-D-GlcA-(1-&gt;3)-beta-D-Gal-(1-&gt;3)-beta-D-Gal-(1-&gt;4)-beta-D-Xyl)-L-seryl-[protein] + UDP + H(+). Glycosyltransferase required for the biosynthesis of the tetrasaccharide (GlcA-Gal-Gal-Xyl-)Ser core linker of heparan sulfate and chondroitin sulfate. May be involved in the biosynthesis of the HNK-1 carbohydrate epitope on glycoproteins. Required for embryonic development. Involved in the elongation of the pharyngeal isthmus during the later stages of embryonic development. Involved in vulval epithelium invagination. The sequence is that of Galactosylgalactosylxylosylprotein 3-beta-glucuronosyltransferase sqv-8 (sqv-8) from Caenorhabditis elegans.